Consider the following 256-residue polypeptide: Hydroxyacylglutathione hydrolase (256 aa).

Positions 55, 57, 59, 60, 113, 130, and 168 each coordinate Zn(2+).

It belongs to the metallo-beta-lactamase superfamily. Glyoxalase II family. In terms of assembly, monomer. Zn(2+) serves as cofactor.

The catalysed reaction is an S-(2-hydroxyacyl)glutathione + H2O = a 2-hydroxy carboxylate + glutathione + H(+). Its pathway is secondary metabolite metabolism; methylglyoxal degradation; (R)-lactate from methylglyoxal: step 2/2. Its function is as follows. Thiolesterase that catalyzes the hydrolysis of S-D-lactoyl-glutathione to form glutathione and D-lactic acid. The protein is Hydroxyacylglutathione hydrolase of Psychromonas ingrahamii (strain DSM 17664 / CCUG 51855 / 37).